A 149-amino-acid chain; its full sequence is Calmodulin-like protein (149 aa).

4 EF-hand domains span residues 6 to 41, 42 to 76, 78 to 113, and 113 to 148; these read TTQA…VGSN, PTQQ…KMKY, DSEA…IGEK, and KLTK…SKSF. Residues aspartate 19, aspartate 21, aspartate 23, lysine 25, and glutamate 30 each contribute to the Ca(2+) site.

Belongs to the calmodulin family.

Its subcellular location is the contractile vacuole. Functionally, mediates the control of a large number of enzymes, ion channels and other proteins by Ca(2+) ions. Among the enzymes to be stimulated by the calmodulin-Ca(2+) complex are a number of protein kinases and phosphatases. This chain is Calmodulin-like protein (calB), found in Dictyostelium discoideum (Social amoeba).